A 289-amino-acid chain; its full sequence is 4-diphosphocytidyl-2-C-methyl-D-erythritol kinase (289 aa).

The active site involves K10. ATP is bound at residue P94–S104. D136 is a catalytic residue.

It belongs to the GHMP kinase family. IspE subfamily.

It carries out the reaction 4-CDP-2-C-methyl-D-erythritol + ATP = 4-CDP-2-C-methyl-D-erythritol 2-phosphate + ADP + H(+). It functions in the pathway isoprenoid biosynthesis; isopentenyl diphosphate biosynthesis via DXP pathway; isopentenyl diphosphate from 1-deoxy-D-xylulose 5-phosphate: step 3/6. Catalyzes the phosphorylation of the position 2 hydroxy group of 4-diphosphocytidyl-2C-methyl-D-erythritol. In Bacillus anthracis (strain CDC 684 / NRRL 3495), this protein is 4-diphosphocytidyl-2-C-methyl-D-erythritol kinase.